The sequence spans 290 residues: 4-hydroxy-tetrahydrodipicolinate synthase (290 aa).

Thr44 is a pyruvate binding site. The Proton donor/acceptor role is filled by Tyr131. The active-site Schiff-base intermediate with substrate is the Lys159. Residue Ile201 coordinates pyruvate.

It belongs to the DapA family. Homotetramer; dimer of dimers.

The protein resides in the cytoplasm. The catalysed reaction is L-aspartate 4-semialdehyde + pyruvate = (2S,4S)-4-hydroxy-2,3,4,5-tetrahydrodipicolinate + H2O + H(+). Its pathway is amino-acid biosynthesis; L-lysine biosynthesis via DAP pathway; (S)-tetrahydrodipicolinate from L-aspartate: step 3/4. In terms of biological role, catalyzes the condensation of (S)-aspartate-beta-semialdehyde [(S)-ASA] and pyruvate to 4-hydroxy-tetrahydrodipicolinate (HTPA). In Jannaschia sp. (strain CCS1), this protein is 4-hydroxy-tetrahydrodipicolinate synthase.